The chain runs to 60 residues: Cecropin-B (60 aa).

The N-terminal stretch at 1–25 is a signal peptide; the sequence is MNFTKLFILVAIAVLVVVGVQPVDG. Leucine 59 carries the post-translational modification Leucine amide.

Belongs to the cecropin family.

The protein localises to the secreted. Its function is as follows. Cecropins have lytic and antibacterial activity against several Gram-positive and Gram-negative bacteria. This Anopheles gambiae (African malaria mosquito) protein is Cecropin-B (CecB).